We begin with the raw amino-acid sequence, 152 residues long: Large ribosomal subunit protein bL9 (152 aa).

Belongs to the bacterial ribosomal protein bL9 family.

In terms of biological role, binds to the 23S rRNA. In Mycobacterium ulcerans (strain Agy99), this protein is Large ribosomal subunit protein bL9.